The chain runs to 134 residues: Small ribosomal subunit protein uS11 (134 aa).

This sequence belongs to the universal ribosomal protein uS11 family. In terms of assembly, part of the 30S ribosomal subunit. Interacts with proteins S7 and S18. Binds to IF-3.

Located on the platform of the 30S subunit, it bridges several disparate RNA helices of the 16S rRNA. Forms part of the Shine-Dalgarno cleft in the 70S ribosome. The sequence is that of Small ribosomal subunit protein uS11 from Micrococcus luteus (strain ATCC 4698 / DSM 20030 / JCM 1464 / CCM 169 / CCUG 5858 / IAM 1056 / NBRC 3333 / NCIMB 9278 / NCTC 2665 / VKM Ac-2230) (Micrococcus lysodeikticus).